A 380-amino-acid polypeptide reads, in one-letter code: Cytochrome b (380 aa).

Transmembrane regions (helical) follow at residues Phe-34–Met-54, Trp-78–Ile-99, Trp-114–Leu-134, and Phe-179–Leu-199. 2 residues coordinate heme b: His-84 and His-98. Heme b contacts are provided by His-183 and His-197. Residue His-202 participates in a ubiquinone binding. A run of 4 helical transmembrane segments spans residues Phe-227–Ala-247, Leu-289–His-309, Ala-321–Gly-341, and Phe-348–Pro-368.

The protein belongs to the cytochrome b family. The cytochrome bc1 complex contains 3 respiratory subunits (MT-CYB, CYC1 and UQCRFS1), 2 core proteins (UQCRC1 and UQCRC2) and probably 6 low-molecular weight proteins. Heme b is required as a cofactor.

It is found in the mitochondrion inner membrane. In terms of biological role, component of the ubiquinol-cytochrome c reductase complex (complex III or cytochrome b-c1 complex) that is part of the mitochondrial respiratory chain. The b-c1 complex mediates electron transfer from ubiquinol to cytochrome c. Contributes to the generation of a proton gradient across the mitochondrial membrane that is then used for ATP synthesis. This is Cytochrome b (mt-cyb) from Rana dybowskii (Dybovsky's frog).